The following is a 60-amino-acid chain: Probable tautomerase SAG1079 (60 aa).

The active-site Proton acceptor; via imino nitrogen is the proline 2.

This sequence belongs to the 4-oxalocrotonate tautomerase family.

The polypeptide is Probable tautomerase SAG1079 (Streptococcus agalactiae serotype V (strain ATCC BAA-611 / 2603 V/R)).